The following is a 228-amino-acid chain: Ankyrin repeat domain-containing protein 46 (228 aa).

ANK repeat units lie at residues 11 to 40 (QTSVPLLQACIDGDLSFARRLLETGCDPNI), 44 to 73 (RGRTGLHLAAARGNVDICRFLHKFGADLLA), 77 to 103 (QGNTALHLCGHVDTIQFLVSNGLKIDI), and 107 to 138 (NGSTPLVLAKRRGVNKDAIRLLEGLEEQEVKG). Residues 195-215 (VLLLLVVIALLSLGIAYYVSG) traverse the membrane as a helical segment.

The protein resides in the membrane. The chain is Ankyrin repeat domain-containing protein 46 (ankrd46) from Danio rerio (Zebrafish).